The following is a 257-amino-acid chain: Imidazole glycerol phosphate synthase subunit HisF (257 aa).

Active-site residues include Asp11 and Asp130.

This sequence belongs to the HisA/HisF family. In terms of assembly, heterodimer of HisH and HisF.

The protein resides in the cytoplasm. It carries out the reaction 5-[(5-phospho-1-deoxy-D-ribulos-1-ylimino)methylamino]-1-(5-phospho-beta-D-ribosyl)imidazole-4-carboxamide + L-glutamine = D-erythro-1-(imidazol-4-yl)glycerol 3-phosphate + 5-amino-1-(5-phospho-beta-D-ribosyl)imidazole-4-carboxamide + L-glutamate + H(+). The protein operates within amino-acid biosynthesis; L-histidine biosynthesis; L-histidine from 5-phospho-alpha-D-ribose 1-diphosphate: step 5/9. Its function is as follows. IGPS catalyzes the conversion of PRFAR and glutamine to IGP, AICAR and glutamate. The HisF subunit catalyzes the cyclization activity that produces IGP and AICAR from PRFAR using the ammonia provided by the HisH subunit. This Shewanella sp. (strain MR-4) protein is Imidazole glycerol phosphate synthase subunit HisF.